The primary structure comprises 158 residues: Protein E6 (158 aa).

Zinc fingers lie at residues 32–68 and 105–141; these read CVYC…CQSC and CMSC…CRHC. The short motif at 156–158 is the PDZ-binding domain element; sequence TQV.

Belongs to the papillomaviridae E6 protein family. In terms of assembly, forms homodimers. Interacts with ubiquitin-protein ligase UBE3A/E6-AP and thus forms a complex with human TP53. Interacts with human NFX1 and MAGI3. Interacts with human IRF3; this interaction inhibits the establishment of antiviral state. Interacts with human TYK2; this interaction inhibits JAK-STAT activation by interferon alpha. Interacts with host DLG1; this interaction leads to the proteasomal degradation of DLG1.

The protein resides in the host cytoplasm. It localises to the host nucleus. In terms of biological role, plays a major role in the induction and maintenance of cellular transformation. Acts mainly as an oncoprotein by stimulating the destruction of many host cell key regulatory proteins. E6 associates with host UBE3A/E6-AP ubiquitin-protein ligase, and inactivates tumor suppressors TP53 and TP73 by targeting them to the 26S proteasome for degradation. In turn, DNA damage and chromosomal instabilities increase and lead to cell proliferation and cancer development. The complex E6/E6AP targets several other substrates to degradation via the proteasome including host DLG1 or NFX1, a repressor of human telomerase reverse transcriptase (hTERT). The resulting increased expression of hTERT prevents the shortening of telomere length leading to cell immortalization. Other cellular targets including BAK1, Fas-associated death domain-containing protein (FADD) and procaspase 8, are degraded by E6/E6AP causing inhibition of apoptosis. E6 also inhibits immune response by interacting with host IRF3 and TYK2. These interactions prevent IRF3 transcriptional activities and inhibit TYK2-mediated JAK-STAT activation by interferon alpha resulting in inhibition of the interferon signaling pathway. This chain is Protein E6, found in Homo sapiens (Human).